Here is a 495-residue protein sequence, read N- to C-terminus: Glucose-6-phosphate 1-dehydrogenase (495 aa).

Residue lysine 51 forms an Isoglutamyl lysine isopeptide (Lys-Gln) (interchain with Q-Cter in protein Pup) linkage. Residues 94 to 95 and lysine 154 contribute to the NADP(+) site; that span reads DL. Substrate-binding residues include histidine 184, lysine 188, glutamate 222, and aspartate 241. Residue histidine 246 is the Proton acceptor of the active site. Lysine 345 is a substrate binding site.

It belongs to the glucose-6-phosphate dehydrogenase family.

It carries out the reaction D-glucose 6-phosphate + NADP(+) = 6-phospho-D-glucono-1,5-lactone + NADPH + H(+). It functions in the pathway carbohydrate degradation; pentose phosphate pathway; D-ribulose 5-phosphate from D-glucose 6-phosphate (oxidative stage): step 1/3. In terms of biological role, catalyzes the oxidation of glucose 6-phosphate to 6-phosphogluconolactone. This Mycolicibacterium smegmatis (strain ATCC 700084 / mc(2)155) (Mycobacterium smegmatis) protein is Glucose-6-phosphate 1-dehydrogenase.